Here is a 387-residue protein sequence, read N- to C-terminus: Bifunctional chorismate mutase/prephenate dehydratase (387 aa).

Positions 1-92 (MNPDNPLLAL…DSVLTQQALL (92 aa)) constitute a Chorismate mutase domain. The substrate site is built by Arg-11, Arg-28, Lys-39, Asp-48, Glu-52, Ser-84, and Gln-88. The 181-residue stretch at 105–285 (RIAFLGPKGS…NHTRFIVLAR (181 aa)) folds into the Prephenate dehydratase domain. Positions 299–376 (TLIMATGQQA…RSLKVLGCYP (78 aa)) constitute an ACT domain.

The protein resides in the cytoplasm. It catalyses the reaction chorismate = prephenate. The enzyme catalyses prephenate + H(+) = 3-phenylpyruvate + CO2 + H2O. The protein operates within amino-acid biosynthesis; L-phenylalanine biosynthesis; phenylpyruvate from prephenate: step 1/1. It participates in metabolic intermediate biosynthesis; prephenate biosynthesis; prephenate from chorismate: step 1/1. Its function is as follows. Catalyzes the Claisen rearrangement of chorismate to prephenate and the decarboxylation/dehydration of prephenate to phenylpyruvate. This Enterobacter agglomerans (Erwinia herbicola) protein is Bifunctional chorismate mutase/prephenate dehydratase (pheA).